A 391-amino-acid chain; its full sequence is Multidrug resistance protein MdtL (391 aa).

Transmembrane regions (helical) follow at residues 4–24 (FLIC…MYLV), 42–62 (IAFS…GKVA), 69–89 (PVAI…SLAE), 93–113 (LFLA…VVAF), 134–154 (GITC…MLNF), 158–178 (SLFW…LFIL), 203–222 (FFLS…LTFV), 245–265 (ALTA…LGIF), 269–289 (TLMI…AVSP), 293–313 (VSLF…GVAM), 331–351 (LGIA…VVGI), and 356–376 (MLIG…MFVA).

Belongs to the major facilitator superfamily. DHA1 family. MdtL (TC 2.A.1.2.22) subfamily.

It is found in the cell inner membrane. Confers resistance to chloramphenicol. The sequence is that of Multidrug resistance protein MdtL from Escherichia coli O81 (strain ED1a).